Consider the following 467-residue polypeptide: Cytochrome c-552 (467 aa).

Residues 1 to 27 (MMKKMTGKSFALSALVAASFMAAGAMA) form the signal peptide. Histidine 87 contacts heme c. Heme-binding residues include cysteine 115, cysteine 118, and lysine 119. Positions 153, 156, 157, 195, 198, and 199 each coordinate heme c. Residues glutamate 201, tyrosine 202, lysine 250, and glutamine 252 each coordinate Ca(2+). Tyrosine 202 is a binding site for substrate. Histidine 253 serves as a coordination point for substrate. Residues histidine 264, cysteine 271, cysteine 274, histidine 275, histidine 290, cysteine 303, cysteine 306, histidine 307, and histidine 382 each contribute to the heme c site.

This sequence belongs to the cytochrome c-552 family. Requires Ca(2+) as cofactor. Heme c serves as cofactor.

The protein localises to the periplasm. The enzyme catalyses 6 Fe(III)-[cytochrome c] + NH4(+) + 2 H2O = 6 Fe(II)-[cytochrome c] + nitrite + 8 H(+). The protein operates within nitrogen metabolism; nitrate reduction (assimilation). Its function is as follows. Catalyzes the reduction of nitrite to ammonia, consuming six electrons in the process. This chain is Cytochrome c-552, found in Shewanella sp. (strain W3-18-1).